Here is a 48-residue protein sequence, read N- to C-terminus: Large ribosomal subunit protein bL34 (48 aa).

It belongs to the bacterial ribosomal protein bL34 family.

In Gloeothece citriformis (strain PCC 7424) (Cyanothece sp. (strain PCC 7424)), this protein is Large ribosomal subunit protein bL34.